The sequence spans 2273 residues: Acetyl-CoA carboxylase, mitochondrial (2273 aa).

The N-terminal 104 residues, 1-104 (KGKTITHGQS…RGNIHKHTRL (104 aa)), are a transit peptide targeting the mitochondrion. The Biotin carboxylation domain occupies 134-635 (VISKILIANN…STGWLDDLIL (502 aa)). Residues 292-484 (KTNFVSVPDD…LPATQLQIAM (193 aa)) enclose the ATP-grasp domain. 332–337 (GGGGKG) is a binding site for ATP. Residue arginine 459 is part of the active site. Residues 763-837 (LEAELNPTQV…EAGDVIAKLT (75 aa)) enclose the Biotinyl-binding domain. Lysine 804 carries the N6-biotinyllysine modification. The CoA carboxyltransferase N-terminal domain maps to 1532 to 1867 (PYSVKDWLQP…KRDMSPPLLE (336 aa)). The tract at residues 1532–2187 (PYSVKDWLQP…EGQVIKRLQK (656 aa)) is carboxyltransferase. CoA contacts are provided by arginine 1776, lysine 2080, and arginine 2082. Positions 1871 to 2187 (RWDRDVDFKP…EGQVIKRLQK (317 aa)) constitute a CoA carboxyltransferase C-terminal domain.

It depends on biotin as a cofactor.

It is found in the mitochondrion. The catalysed reaction is hydrogencarbonate + acetyl-CoA + ATP = malonyl-CoA + ADP + phosphate + H(+). The enzyme catalyses N(6)-biotinyl-L-lysyl-[protein] + hydrogencarbonate + ATP = N(6)-carboxybiotinyl-L-lysyl-[protein] + ADP + phosphate + H(+). It functions in the pathway lipid metabolism; malonyl-CoA biosynthesis; malonyl-CoA from acetyl-CoA: step 1/1. Its function is as follows. Catalyzes the rate-limiting reaction in the mitochondrial fatty acid synthesis (FAS) type II pathway. Responsible for the production of the mitochondrial malonyl-CoA, used for the biosynthesis of the cofactor lipoic acid. This protein carries three functions: biotin carboxyl carrier protein, biotin carboxylase, and carboxyltransferase. In Saccharomyces cerevisiae (strain JAY291) (Baker's yeast), this protein is Acetyl-CoA carboxylase, mitochondrial (HFA1).